Reading from the N-terminus, the 415-residue chain is Gamma-glutamyl phosphate reductase (415 aa).

It belongs to the gamma-glutamyl phosphate reductase family.

It localises to the cytoplasm. It carries out the reaction L-glutamate 5-semialdehyde + phosphate + NADP(+) = L-glutamyl 5-phosphate + NADPH + H(+). It participates in amino-acid biosynthesis; L-proline biosynthesis; L-glutamate 5-semialdehyde from L-glutamate: step 2/2. Functionally, catalyzes the NADPH-dependent reduction of L-glutamate 5-phosphate into L-glutamate 5-semialdehyde and phosphate. The product spontaneously undergoes cyclization to form 1-pyrroline-5-carboxylate. The chain is Gamma-glutamyl phosphate reductase from Shouchella clausii (strain KSM-K16) (Alkalihalobacillus clausii).